We begin with the raw amino-acid sequence, 524 residues long: Tissue-resident T-cell transcription regulator protein ZNF683 (524 aa).

The segment covering 130 to 142 has biased composition (basic and acidic residues); that stretch reads NKDKLGKQPERAG. 2 disordered regions span residues 130 to 166 and 265 to 303; these read NKDK…NRKS and QALP…LSSQ. 2 C2H2-type zinc fingers span residues 322–344 and 350–372; these read YECN…LRVH and FQCA…HLVH. The segment at 398 to 420 adopts a C2H2-type 3; degenerate zinc-finger fold; the sequence is REREVCHKRFSSSSNLKTHLRLH. The segment at 426-448 adopts a C2H2-type 4 zinc-finger fold; that stretch reads FQCSVCRSRFTQHIHLKLHHRLH.

This sequence belongs to the krueppel C2H2-type zinc-finger protein family. In terms of tissue distribution, expressed in terminally differentiated effector CD8(+) T-cells, but not in naive and central memory cells. Expressed in terminally differentiated natural killer (NK) cells and natural killer (NKT) T-cells (at protein level). Expressed strongly in effector-type CD8(+) T-cells and weakly in naive and memory CD8(+) T-cells. Expressed in terminally differentiated natural killer (NK) cells. Isoform 2 is strongly expressed in effector CD8(+) T and natural killer (NK) cells. Isoform 1 is expressed in effector CD8(+) T and natural killer (NK) cells. (Microbial infection) Expressed in cytomegalovirus (CMV)-infected effector CD8(+) T-cells (at protein level).

The protein resides in the nucleus. Functionally, transcription factor that mediates a transcriptional program in various innate and adaptive immune tissue-resident lymphocyte T-cell types such as tissue-resident memory T (Trm), natural killer (trNK) and natural killer T (NKT) cells and negatively regulates gene expression of proteins that promote the egress of tissue-resident T-cell populations from non-lymphoid organs. Plays a role in the development, retention and long-term establishment of adaptive and innate tissue-resident lymphocyte T cell types in non-lymphoid organs, such as the skin and gut, but also in other nonbarrier tissues like liver and kidney, and therefore may provide immediate immunological protection against reactivating infections or viral reinfection. Also plays a role in the differentiation of both thymic and peripheral NKT cells. Negatively regulates the accumulation of interferon-gamma (IFN-gamma) in NKT cells at steady state or after antigenic stimulation. Positively regulates granzyme B production in NKT cells after innate stimulation. Associates with the transcriptional repressor PRDM1/BLIMP1 to chromatin at gene promoter regions. Its function is as follows. Lacks transcriptional repressor activity. Binds to DNA within promoter regions of the transcriptional repressor PRDM1/BLIMP1 target sites. Unable to regulate interferon-gamma (IFN-gamma) production in cytomegalovirus (CMV)-infected effector CD8(+) T-cells. Transcriptional repressor that binds to DNA within promoter regions of the transcriptional repressor PRDM1/BLIMP1 target sites. Regulates interferon-gamma (IFN-gamma) production in cytomegalovirus (CMV)-infected effector CD8(+) T cells. The chain is Tissue-resident T-cell transcription regulator protein ZNF683 from Homo sapiens (Human).